A 148-amino-acid polypeptide reads, in one-letter code: Snaclec B2 (148 aa).

A signal peptide spans 1 to 24 (MGRLISVSFGLLVVFLSLSGTGAA). 3 disulfides stabilise this stretch: Cys-27–Cys-38, Cys-55–Cys-144, and Cys-121–Cys-136. Residues 34-145 (YDQHCYKVFD…CRLLGHFVCK (112 aa)) form the C-type lectin domain.

The protein belongs to the snaclec family. As to quaternary structure, heterodimer; disulfide-linked. In terms of tissue distribution, expressed by the venom gland.

The protein resides in the secreted. In terms of biological role, interferes with one step of hemostasis (modulation of platelet aggregation, or coagulation cascade, for example). The chain is Snaclec B2 from Macrovipera lebetinus (Levantine viper).